Consider the following 88-residue polypeptide: MSKKLFIGSSLLSKEQTGSVEFQISHLTNRVLKLTDHLKFHDKDYSSQRGLLKILGKRKRLLSYLSKTNLTSYETLINKLNIRKLKNR.

It belongs to the universal ribosomal protein uS15 family. As to quaternary structure, part of the 30S ribosomal subunit.

The protein localises to the plastid. The protein resides in the chloroplast. In Physcomitrium patens (Spreading-leaved earth moss), this protein is Small ribosomal subunit protein uS15c (rps15).